The following is a 191-amino-acid chain: MSYMHSLNLMLQNPSGIDKIAAILVNVARLDPASSKSTAQLVSMLNEFRCILRLPGLYKLIVNFRKDSSPETYMSNAINIGYYVTEGLAFLGGKQIISISKPLEDKLWLWSSRFWLLDTLLTIYQLLREKTEDEKEHQLDLASNLASLPLCIHWSVENGAGLHKHQIGVLGLFSAIVQTRKLILSLHNKRA.

This is an uncharacterized protein from Schizosaccharomyces pombe (strain 972 / ATCC 24843) (Fission yeast).